A 126-amino-acid chain; its full sequence is Large ribosomal subunit protein uL22 (126 aa).

Belongs to the universal ribosomal protein uL22 family. As to quaternary structure, part of the 50S ribosomal subunit.

In terms of biological role, this protein binds specifically to 23S rRNA; its binding is stimulated by other ribosomal proteins, e.g. L4, L17, and L20. It is important during the early stages of 50S assembly. It makes multiple contacts with different domains of the 23S rRNA in the assembled 50S subunit and ribosome. Functionally, the globular domain of the protein is located near the polypeptide exit tunnel on the outside of the subunit, while an extended beta-hairpin is found that lines the wall of the exit tunnel in the center of the 70S ribosome. The sequence is that of Large ribosomal subunit protein uL22 from Rhodospirillum rubrum (strain ATCC 11170 / ATH 1.1.1 / DSM 467 / LMG 4362 / NCIMB 8255 / S1).